Reading from the N-terminus, the 326-residue chain is Small ribosomal subunit protein uS3m (326 aa).

It belongs to the universal ribosomal protein uS3 family.

The protein localises to the mitochondrion. In terms of biological role, essential for mitochondrial protein synthesis and required for the maturation of small ribosomal subunits. The protein is Small ribosomal subunit protein uS3m (VAR1) of Naumovozyma castellii (Yeast).